Here is a 347-residue protein sequence, read N- to C-terminus: NADH-ubiquinone oxidoreductase chain 2 (347 aa).

10 helical membrane-spanning segments follow: residues 3 to 23 (PPIL…VLTS), 25 to 45 (HWLT…PILM), 60 to 80 (LLTQ…NLMF), 96 to 116 (AMVT…FWVP), 149 to 169 (IDPN…GWGG), 178 to 198 (ILAY…LYNP), 200 to 220 (MMLL…MLFM), 237 to 257 (APLI…LPPL), 274 to 294 (EMII…YFYM), and 323 to 343 (MILL…TPLL).

It belongs to the complex I subunit 2 family. In terms of assembly, core subunit of respiratory chain NADH dehydrogenase (Complex I) which is composed of 45 different subunits. Interacts with TMEM242.

The protein resides in the mitochondrion inner membrane. The enzyme catalyses a ubiquinone + NADH + 5 H(+)(in) = a ubiquinol + NAD(+) + 4 H(+)(out). In terms of biological role, core subunit of the mitochondrial membrane respiratory chain NADH dehydrogenase (Complex I) which catalyzes electron transfer from NADH through the respiratory chain, using ubiquinone as an electron acceptor. Essential for the catalytic activity and assembly of complex I. This chain is NADH-ubiquinone oxidoreductase chain 2, found in Mungos mungo (Banded mongoose).